Reading from the N-terminus, the 909-residue chain is Alanine--tRNA ligase (909 aa).

Residues His600, His604, Cys704, and His708 each coordinate Zn(2+).

The protein belongs to the class-II aminoacyl-tRNA synthetase family. It depends on Zn(2+) as a cofactor.

The protein localises to the cytoplasm. The catalysed reaction is tRNA(Ala) + L-alanine + ATP = L-alanyl-tRNA(Ala) + AMP + diphosphate. Its function is as follows. Catalyzes the attachment of alanine to tRNA(Ala) in a two-step reaction: alanine is first activated by ATP to form Ala-AMP and then transferred to the acceptor end of tRNA(Ala). Also edits incorrectly charged Ser-tRNA(Ala) and Gly-tRNA(Ala) via its editing domain. The sequence is that of Alanine--tRNA ligase from Staphylothermus marinus (strain ATCC 43588 / DSM 3639 / JCM 9404 / F1).